The sequence spans 208 residues: Proheparin-binding EGF-like growth factor (208 aa).

The N-terminal stretch at 1 to 19 is a signal peptide; it reads MKLLPSVVLKLLLAAVLSA. A propeptide spanning residues 20-62 is cleaved from the precursor; it reads LVTGESLEQLRRGLAAGTSNPDPSTGSTDQLLRLGGGRDRKVR. The Extracellular portion of the chain corresponds to 20–160; sequence LVTGESLEQL…ENRLYTYDHT (141 aa). Residues 34-55 form a disordered region; that stretch reads AAGTSNPDPSTGSTDQLLRLGG. The segment covering 36-49 has biased composition (polar residues); it reads GTSNPDPSTGSTDQ. Residues threonine 75 and threonine 85 are each glycosylated (O-linked (GalNAc...) threonine). The disordered stretch occupies residues 81–104; the sequence is QALATPSKEEHGKRKKKGKGLGKK. The span at 93–102 shows a compositional bias: basic residues; the sequence is KRKKKGKGLG. The EGF-like domain maps to 104–144; that stretch reads KRDPCLRKYKDFCIHGECKYVKELRAPSCICHPGYHGERCH. 3 disulfides stabilise this stretch: cysteine 108–cysteine 121, cysteine 116–cysteine 132, and cysteine 134–cysteine 143. Residues 136-148 are toxin-binding domain; that stretch reads PGYHGERCHGLSL. The propeptide at 149-208 is C-terminal; sequence PVENRLYTYDHTTILAVVAVVLSSVCLLVIVGLLMFRYHRRGGYDVENEEKVKLGMTNSH. A helical transmembrane segment spans residues 161–184; it reads TILAVVAVVLSSVCLLVIVGLLMF. Topologically, residues 185–208 are cytoplasmic; sequence RYHRRGGYDVENEEKVKLGMTNSH.

As to quaternary structure, interacts with EGFR and ERBB4. Interacts with FBLN1. Post-translationally, O-glycosylated.

The protein resides in the secreted. It localises to the extracellular space. Its subcellular location is the cell membrane. Functionally, growth factor that mediates its effects via EGFR, ERBB2 and ERBB4. Required for normal cardiac valve formation and normal heart function. Promotes smooth muscle cell proliferation. May be involved in macrophage-mediated cellular proliferation. It is mitogenic for fibroblasts, but not endothelial cells. It is able to bind EGF receptor/EGFR with higher affinity than EGF itself and is a far more potent mitogen for smooth muscle cells than EGF. Also acts as a diphtheria toxin receptor. The chain is Proheparin-binding EGF-like growth factor (HBEGF) from Chlorocebus aethiops (Green monkey).